The sequence spans 378 residues: CST complex subunit STN1 (378 aa).

Residues 8–195 (MECESSPREE…KVYDQPFRNP (188 aa)) are interaction with CTC1. A DNA-binding region (OB) is located at residues 64–165 (VDIMGAVISV…EICANIYYKV (102 aa)). 2 winged helix-turn-helix (wHTH) regions span residues 201–305 (EALN…YVTT) and 306–378 (KDKD…YAAF).

This sequence belongs to the STN1 family. Component of the CST complex, composed of TEN1/C17orf106, CTC1/C17orf68 and STN1; in the complex interacts directly with TEN1 and CTC1. Interacts with ACD/TPP1. Interacts with POT1 and POLA1.

The protein resides in the nucleus. It localises to the chromosome. The protein localises to the telomere. In terms of biological role, component of the CST complex proposed to act as a specialized replication factor promoting DNA replication under conditions of replication stress or natural replication barriers such as the telomere duplex. The CST complex binds single-stranded DNA with high affinity in a sequence-independent manner, while isolated subunits bind DNA with low affinity by themselves. Initially the CST complex has been proposed to protect telomeres from DNA degradation. However, the CST complex has been shown to be involved in several aspects of telomere replication. The CST complex inhibits telomerase and is involved in telomere length homeostasis; it is proposed to bind to newly telomerase-synthesized 3' overhangs and to terminate telomerase action implicating the association with the ACD:POT1 complex thus interfering with its telomerase stimulation activity. The CST complex is also proposed to be involved in fill-in synthesis of the telomeric C-strand probably implicating recruitment and activation of DNA polymerase alpha. The CST complex facilitates recovery from many forms of exogenous DNA damage; seems to be involved in the re-initiation of DNA replication at repaired forks and/or dormant origins. Required for efficicient replication of the duplex region of the telomere. Promotes efficient replication of lagging-strand telomeres. Promotes general replication start following replication-fork stalling implicating new origin firing. May be in involved in C-strand fill-in during late S/G2 phase independent of its role in telomere duplex replication. The sequence is that of CST complex subunit STN1 from Mus musculus (Mouse).